The sequence spans 97 residues: MKSGIHPDYHPVVFQDATTGATFLTRSTITSSRTIEWETPHGVRTYPLVVVEITSDSHPFWTGSRRIVDTAGQVEKFHRRYGSRRQTNHRDDAAHSP.

The protein belongs to the bacterial ribosomal protein bL31 family. Type B subfamily. Part of the 50S ribosomal subunit.

The sequence is that of Large ribosomal subunit protein bL31B (rpmE2) from Mycolicibacterium paratuberculosis (strain ATCC BAA-968 / K-10) (Mycobacterium paratuberculosis).